Consider the following 326-residue polypeptide: Alkanal monooxygenase beta chain (326 aa).

Belongs to the bacterial luciferase oxidoreductase family. Heterodimer of an alpha and a beta chain.

It catalyses the reaction a long-chain fatty aldehyde + FMNH2 + O2 = a long-chain fatty acid + hnu + FMN + H2O + 2 H(+). Light-emitting reaction in luminous bacteria. The specific role of the beta subunit is unknown, but it is absolutely required for bioluminescence activity. The chain is Alkanal monooxygenase beta chain (luxB) from Photobacterium leiognathi.